A 262-amino-acid chain; its full sequence is Hydroxyethylthiazole kinase (262 aa).

Methionine 50 contacts substrate. ATP-binding residues include arginine 125 and threonine 171. Glycine 198 is a binding site for substrate.

It belongs to the Thz kinase family. Mg(2+) serves as cofactor.

The enzyme catalyses 5-(2-hydroxyethyl)-4-methylthiazole + ATP = 4-methyl-5-(2-phosphooxyethyl)-thiazole + ADP + H(+). Its pathway is cofactor biosynthesis; thiamine diphosphate biosynthesis; 4-methyl-5-(2-phosphoethyl)-thiazole from 5-(2-hydroxyethyl)-4-methylthiazole: step 1/1. Functionally, catalyzes the phosphorylation of the hydroxyl group of 4-methyl-5-beta-hydroxyethylthiazole (THZ). This chain is Hydroxyethylthiazole kinase, found in Escherichia coli O157:H7.